A 289-amino-acid polypeptide reads, in one-letter code: 4-diphosphocytidyl-2-C-methyl-D-erythritol kinase (289 aa).

Residue Lys10 is part of the active site. Position 94-104 (94-104) interacts with ATP; it reads PVAAGLAGGSS. Asp136 is an active-site residue.

It belongs to the GHMP kinase family. IspE subfamily.

The catalysed reaction is 4-CDP-2-C-methyl-D-erythritol + ATP = 4-CDP-2-C-methyl-D-erythritol 2-phosphate + ADP + H(+). It functions in the pathway isoprenoid biosynthesis; isopentenyl diphosphate biosynthesis via DXP pathway; isopentenyl diphosphate from 1-deoxy-D-xylulose 5-phosphate: step 3/6. Catalyzes the phosphorylation of the position 2 hydroxy group of 4-diphosphocytidyl-2C-methyl-D-erythritol. This Bacillus pumilus (strain SAFR-032) protein is 4-diphosphocytidyl-2-C-methyl-D-erythritol kinase.